Consider the following 187-residue polypeptide: Elongation factor P (187 aa).

It belongs to the elongation factor P family.

It is found in the cytoplasm. It functions in the pathway protein biosynthesis; polypeptide chain elongation. In terms of biological role, involved in peptide bond synthesis. Stimulates efficient translation and peptide-bond synthesis on native or reconstituted 70S ribosomes in vitro. Probably functions indirectly by altering the affinity of the ribosome for aminoacyl-tRNA, thus increasing their reactivity as acceptors for peptidyl transferase. This Leifsonia xyli subsp. xyli (strain CTCB07) protein is Elongation factor P.